The chain runs to 451 residues: Hexokinase (451 aa).

The 440-residue stretch at 6–445 (QQLFEKVVEI…SGKGAAAIAA (440 aa)) folds into the Hexokinase domain. A hexokinase small subdomain region spans residues 63–195 (NGTETGNFLA…ELNVKCVAVV (133 aa)). 74-79 (DLGGTN) is a binding site for ATP. Substrate contacts are provided by residues serine 144, 161-162 (TK), 196-197 (ND), 222-223 (TN), glutamate 249, and glutamate 283. Residues 196–434 (NDTVGTLASC…TRFCLRLSED (239 aa)) form a hexokinase large subdomain region. Residues 288–289 (GM), 325–329 (TRYLT), and 401–405 (SLYKF) contribute to the ATP site.

This sequence belongs to the hexokinase family. Monomer.

It catalyses the reaction a D-hexose + ATP = a D-hexose 6-phosphate + ADP + H(+). The enzyme catalyses D-mannose + ATP = D-mannose 6-phosphate + ADP + H(+). It carries out the reaction D-fructose + ATP = D-fructose 6-phosphate + ADP + H(+). The catalysed reaction is D-glucose + ATP = D-glucose 6-phosphate + ADP + H(+). It participates in carbohydrate metabolism; hexose metabolism. It functions in the pathway carbohydrate degradation; glycolysis; D-glyceraldehyde 3-phosphate and glycerone phosphate from D-glucose: step 1/4. In terms of biological role, catalyzes the phosphorylation of various hexoses to hexose 6-phosphate. The sequence is that of Hexokinase from Schistosoma mansoni (Blood fluke).